The following is an 89-amino-acid chain: UPF0298 protein GK1096 (89 aa).

It belongs to the UPF0298 family.

The protein resides in the cytoplasm. The sequence is that of UPF0298 protein GK1096 from Geobacillus kaustophilus (strain HTA426).